Consider the following 436-residue polypeptide: Adenine nucleotide transporter BT1, chloroplastic/amyloplastic/mitochondrial (436 aa).

The disordered stretch occupies residues 83 to 135 (ASLAPPFPGSRPPGRRGRGSEEEEAEGRRHEEAAAAGRSEPEEGQGQDRQPAP). Solcar repeat units lie at residues 132 to 216 (QPAP…AKKF), 227 to 311 (IPIP…LKRL), and 324 to 412 (VGPV…CKKI). The next 6 helical transmembrane spans lie at 137-158 (RLVSGAIAGAVSRTFVAPLETI), 193-213 (AVNVLRVAPSKAIEHFTYDTA), 229-247 (IPTPLVAGALAGFASTLCT), 290-310 (SLIGVVPYAACNFYAYETLKR), 327-347 (VATLLIGSAAGAIASSATFPL), and 384-405 (LYRGLGPSCIKLMPAAGIAFMC). Positions 417–428 (EDEEEEDEAGGG) are enriched in acidic residues. The disordered stretch occupies residues 417-436 (EDEEEEDEAGGGEDDKKKVE).

This sequence belongs to the mitochondrial carrier (TC 2.A.29) family. In terms of tissue distribution, highly expressed in silks and endosperm of developing kernels. Expressed at intermediate levels in tassels and lower levels in stems and leaves.

Its subcellular location is the plastid. The protein localises to the chloroplast inner membrane. The protein resides in the amyloplast inner membrane. It is found in the mitochondrion inner membrane. With respect to regulation, inhibited by mersalyl. Its function is as follows. Probable adenylate translocator that mediates transport of ADP-glucose into endosperm storage plastids during starch synthesis. Transports cytosolic ADP-glucose to amyloplast stroma by counter-exchange with ADP. This Zea mays (Maize) protein is Adenine nucleotide transporter BT1, chloroplastic/amyloplastic/mitochondrial (BT1).